The following is a 60-amino-acid chain: Cytotoxin 1 (60 aa).

4 cysteine pairs are disulfide-bonded: Cys3-Cys21, Cys14-Cys38, Cys42-Cys53, and Cys54-Cys59.

The protein belongs to the three-finger toxin family. Short-chain subfamily. Type IA cytotoxin sub-subfamily. In terms of assembly, monomer in solution; Homodimer and oligomer in the presence of negatively charged lipids forming a pore with a size ranging between 20 and 30 Angstroms. Expressed by the venom gland.

The protein localises to the secreted. It localises to the target cell membrane. In terms of biological role, shows cytolytic activity on many different cells by forming pore in lipid membranes. In vivo, increases heart rate or kills the animal by cardiac arrest. In addition, it binds to heparin with high affinity, interacts with Kv channel-interacting protein 1 (KCNIP1) in a calcium-independent manner, and binds to integrin alpha-V/beta-3 (ITGAV/ITGB3) with moderate affinity. The chain is Cytotoxin 1 from Naja melanoleuca (Forest cobra).